The sequence spans 1210 residues: AF4/FMR2 family member 1 (1210 aa).

4 disordered regions span residues 1–45, 73–314, 366–957, and 1098–1119; these read MAAQ…GEPY, TKSH…KPLP, SWPP…KPQV, and TGTP…SQSS. Composition is skewed to basic and acidic residues over residues 9–35 and 78–87; these read NDDR…EAFP and HRLDASENRL. 3 positions are modified to phosphoserine: Ser-199, Ser-206, and Ser-212. The span at 215–238 shows a compositional bias: polar residues; that stretch reads HSNQQTLPRTQGSSKVHGSSNNSK. Thr-220 carries the post-translational modification Phosphothreonine. Residues 245 to 259 show a composition bias toward basic and acidic residues; it reads SPKDLAVKVHDKETP. Pro residues predominate over residues 267–279; that stretch reads AQPPSQTFPPPSL. Over residues 394 to 419 the composition is skewed to polar residues; that stretch reads HVSSVTQNQKQYDTSSKTHSNSQQGT. The segment covering 423–439 has biased composition (acidic residues); that stretch reads LEDDLQLSDSEDSDSEQ. Residues 442–453 show a composition bias toward pro residues; it reads EKPPSSSAPPSA. The span at 454–472 shows a compositional bias: low complexity; sequence PQSLPEPVASAHSSSAESE. The segment covering 473 to 497 has biased composition (acidic residues); it reads STSDSDSSSDSESESSSSDSEENEP. The span at 536-546 shows a compositional bias: basic and acidic residues; that stretch reads EPPRRHPESKG. Residues 586–602 are compositionally biased toward polar residues; it reads QKSPAQQEPPQRQTVGT. Position 588 is a phosphoserine (Ser-588). Lys-681 carries the post-translational modification N6-acetyllysine. The segment covering 688-699 has biased composition (basic and acidic residues); that stretch reads PAKDNVEDRTPE. Thr-697 bears the Phosphothreonine mark. The span at 707–724 shows a compositional bias: polar residues; that stretch reads TESQGPPHSGSGSRTSGC. Over residues 732–747 the composition is skewed to basic and acidic residues; sequence EDSRKDRLPLPLRDTK. Ser-750 is modified (phosphoserine). Thr-755 bears the Phosphothreonine mark. Residues 816-834 show a composition bias toward basic and acidic residues; that stretch reads GEAERDCDNKKIRLEKEIK. Low complexity predominate over residues 871–880; it reads SSSSQKPAKP. Over residues 906 to 932 the composition is skewed to basic and acidic residues; it reads NHKDSSIPKQRRVEGKGSRSSSEHKGS. The span at 1110–1119 shows a compositional bias: low complexity; the sequence is PASSVGSQSS.

This sequence belongs to the AF4 family. Component of the super elongation complex (SEC), at least composed of EAF1, EAF2, CDK9, MLLT3/AF9, AFF (AFF1 or AFF4), the P-TEFb complex and ELL (ELL, ELL2 or ELL3).

It localises to the nucleus. This Homo sapiens (Human) protein is AF4/FMR2 family member 1 (AFF1).